The sequence spans 116 residues: MNLISTVILIASALSLILILVSFWLPQLSPDYEKLSPYECGFDPLGSARLPFSLRFFLIAILFLLFDLEIALLLPLPWGDQLSNPTLTFMWATSVLALLTLGLIYEWLQGGLEWAE.

3 helical membrane-spanning segments follow: residues 3–23, 56–76, and 87–107; these read LIST…LVSF, FFLI…LLPL, and LTFM…IYEW.

This sequence belongs to the complex I subunit 3 family.

The protein localises to the mitochondrion membrane. The catalysed reaction is a ubiquinone + NADH + 5 H(+)(in) = a ubiquinol + NAD(+) + 4 H(+)(out). Core subunit of the mitochondrial membrane respiratory chain NADH dehydrogenase (Complex I) that is believed to belong to the minimal assembly required for catalysis. Complex I functions in the transfer of electrons from NADH to the respiratory chain. The immediate electron acceptor for the enzyme is believed to be ubiquinone. The chain is NADH-ubiquinone oxidoreductase chain 3 (MT-ND3) from Gadus morhua (Atlantic cod).